Reading from the N-terminus, the 349-residue chain is tRNA pseudouridine synthase D (349 aa).

A substrate-binding site is contributed by phenylalanine 27. Aspartate 80 functions as the Nucleophile in the catalytic mechanism. Substrate is bound at residue asparagine 129. Positions glycine 155–leucine 303 constitute a TRUD domain. Phenylalanine 329 serves as a coordination point for substrate.

The protein belongs to the pseudouridine synthase TruD family.

The enzyme catalyses uridine(13) in tRNA = pseudouridine(13) in tRNA. In terms of biological role, responsible for synthesis of pseudouridine from uracil-13 in transfer RNAs. This Escherichia coli O127:H6 (strain E2348/69 / EPEC) protein is tRNA pseudouridine synthase D.